Consider the following 922-residue polypeptide: Isoleucine--tRNA ligase (922 aa).

Residues 58 to 68 (PYANGDIHIGH) carry the 'HIGH' region motif. Glu552 is an L-isoleucyl-5'-AMP binding site. The 'KMSKS' region motif lies at 593 to 597 (KMSKS). Lys596 serves as a coordination point for ATP. Zn(2+) is bound by residues Cys885, Cys888, Cys905, and Cys908.

The protein belongs to the class-I aminoacyl-tRNA synthetase family. IleS type 1 subfamily. As to quaternary structure, monomer. Zn(2+) is required as a cofactor.

The protein resides in the cytoplasm. It catalyses the reaction tRNA(Ile) + L-isoleucine + ATP = L-isoleucyl-tRNA(Ile) + AMP + diphosphate. Functionally, catalyzes the attachment of isoleucine to tRNA(Ile). As IleRS can inadvertently accommodate and process structurally similar amino acids such as valine, to avoid such errors it has two additional distinct tRNA(Ile)-dependent editing activities. One activity is designated as 'pretransfer' editing and involves the hydrolysis of activated Val-AMP. The other activity is designated 'posttransfer' editing and involves deacylation of mischarged Val-tRNA(Ile). This Ruthia magnifica subsp. Calyptogena magnifica protein is Isoleucine--tRNA ligase.